Reading from the N-terminus, the 228-residue chain is Lipoprotein-releasing system ATP-binding protein LolD (228 aa).

An ABC transporter domain is found at 6–228; it reads LRLSGIEKTY…LSDGRLSAES (223 aa). 43–50 lines the ATP pocket; that stretch reads APSGAGKS.

This sequence belongs to the ABC transporter superfamily. Lipoprotein translocase (TC 3.A.1.125) family. In terms of assembly, the complex is composed of two ATP-binding proteins (LolD) and two transmembrane proteins (LolC and LolE).

Its subcellular location is the cell inner membrane. Functionally, part of the ABC transporter complex LolCDE involved in the translocation of mature outer membrane-directed lipoproteins, from the inner membrane to the periplasmic chaperone, LolA. Responsible for the formation of the LolA-lipoprotein complex in an ATP-dependent manner. This chain is Lipoprotein-releasing system ATP-binding protein LolD, found in Ruegeria pomeroyi (strain ATCC 700808 / DSM 15171 / DSS-3) (Silicibacter pomeroyi).